The chain runs to 355 residues: Anthranilate phosphoribosyltransferase (355 aa).

5-phospho-alpha-D-ribose 1-diphosphate contacts are provided by residues Gly-99, 102–103 (GD), Thr-107, 109–112 (NIST), 127–135 (KHGNRSVSS), and Ser-139. Gly-99 contributes to the anthranilate binding site. Ser-111 lines the Mg(2+) pocket. Asn-130 contacts anthranilate. Arg-185 serves as a coordination point for anthranilate. Mg(2+) is bound by residues Asp-243 and Glu-244.

This sequence belongs to the anthranilate phosphoribosyltransferase family. Homodimer. Mg(2+) serves as cofactor.

It catalyses the reaction N-(5-phospho-beta-D-ribosyl)anthranilate + diphosphate = 5-phospho-alpha-D-ribose 1-diphosphate + anthranilate. It participates in amino-acid biosynthesis; L-tryptophan biosynthesis; L-tryptophan from chorismate: step 2/5. In terms of biological role, catalyzes the transfer of the phosphoribosyl group of 5-phosphorylribose-1-pyrophosphate (PRPP) to anthranilate to yield N-(5'-phosphoribosyl)-anthranilate (PRA). This is Anthranilate phosphoribosyltransferase from Pseudoalteromonas translucida (strain TAC 125).